Consider the following 315-residue polypeptide: ATP synthase gamma chain (315 aa).

This sequence belongs to the ATPase gamma chain family. F-type ATPases have 2 components, CF(1) - the catalytic core - and CF(0) - the membrane proton channel. CF(1) has five subunits: alpha(3), beta(3), gamma(1), delta(1), epsilon(1). CF(0) has three main subunits: a, b and c.

It is found in the cellular thylakoid membrane. Produces ATP from ADP in the presence of a proton gradient across the membrane. The gamma chain is believed to be important in regulating ATPase activity and the flow of protons through the CF(0) complex. The sequence is that of ATP synthase gamma chain from Cyanothece sp. (strain PCC 7425 / ATCC 29141).